The following is a 571-amino-acid chain: Proline--tRNA ligase (571 aa).

The protein belongs to the class-II aminoacyl-tRNA synthetase family. ProS type 1 subfamily. Homodimer.

It is found in the cytoplasm. The catalysed reaction is tRNA(Pro) + L-proline + ATP = L-prolyl-tRNA(Pro) + AMP + diphosphate. Its function is as follows. Catalyzes the attachment of proline to tRNA(Pro) in a two-step reaction: proline is first activated by ATP to form Pro-AMP and then transferred to the acceptor end of tRNA(Pro). As ProRS can inadvertently accommodate and process non-cognate amino acids such as alanine and cysteine, to avoid such errors it has two additional distinct editing activities against alanine. One activity is designated as 'pretransfer' editing and involves the tRNA(Pro)-independent hydrolysis of activated Ala-AMP. The other activity is designated 'posttransfer' editing and involves deacylation of mischarged Ala-tRNA(Pro). The misacylated Cys-tRNA(Pro) is not edited by ProRS. The chain is Proline--tRNA ligase from Actinobacillus pleuropneumoniae serotype 5b (strain L20).